A 270-amino-acid polypeptide reads, in one-letter code: tRNA pseudouridine synthase A (270 aa).

Residue aspartate 51 is the Nucleophile of the active site. Tyrosine 109 is a binding site for substrate.

Belongs to the tRNA pseudouridine synthase TruA family. In terms of assembly, homodimer.

The enzyme catalyses uridine(38/39/40) in tRNA = pseudouridine(38/39/40) in tRNA. Its function is as follows. Formation of pseudouridine at positions 38, 39 and 40 in the anticodon stem and loop of transfer RNAs. The protein is tRNA pseudouridine synthase A of Burkholderia lata (strain ATCC 17760 / DSM 23089 / LMG 22485 / NCIMB 9086 / R18194 / 383).